The chain runs to 177 residues: Deoxyuridine 5'-triphosphate nucleotidohydrolase (177 aa).

Residues 83–85, asparagine 96, 100–102, and lysine 110 contribute to the substrate site; these read RSG and TID. Residues 150–163 show a composition bias toward polar residues; sequence DLTSSQTDLSNQPN. Residues 150-177 are disordered; sequence DLTSSQTDLSNQPNTGRGTGGFGSTGQK. Residues 166 to 177 are compositionally biased toward gly residues; sequence RGTGGFGSTGQK.

The protein belongs to the dUTPase family. Requires Mg(2+) as cofactor.

The enzyme catalyses dUTP + H2O = dUMP + diphosphate + H(+). Its pathway is pyrimidine metabolism; dUMP biosynthesis; dUMP from dCTP (dUTP route): step 2/2. This enzyme is involved in nucleotide metabolism: it produces dUMP, the immediate precursor of thymidine nucleotides and it decreases the intracellular concentration of dUTP so that uracil cannot be incorporated into DNA. This chain is Deoxyuridine 5'-triphosphate nucleotidohydrolase, found in Bartonella bacilliformis (strain ATCC 35685 / KC583 / Herrer 020/F12,63).